The chain runs to 196 residues: FAD-linked sulfhydryl oxidase ERV2 (196 aa).

Residues 1–12 (MKQIVKRSHAIR) lie on the Cytoplasmic side of the membrane. Residues 13-35 (IVAALGIIGLWMFFSSNELSIAT) form a helical; Signal-anchor membrane-spanning segment. Residues 36-196 (PGLIKAKSGI…SLEKEAKQHG (161 aa)) are Lumenal-facing. The 103-residue stretch at 72–174 (MGDDKVKKEV…YDCATILEDY (103 aa)) folds into the ERV/ALR sulfhydryl oxidase domain. FAD-binding residues include lysine 78, arginine 83, and tryptophan 86. Residues cysteine 121 and cysteine 124 are joined by a disulfide bond. FAD contacts are provided by histidine 127, cysteine 150, histidine 153, asparagine 157, lysine 162, and tyrosine 174. Cysteine 150 and cysteine 167 form a disulfide bridge. A disulfide bridge connects residues cysteine 176 and cysteine 178.

As to quaternary structure, homodimer. Interacts with the substrate protein PDI1, forming transient intermolecular disulfide bridges. Requires FAD as cofactor.

It localises to the endoplasmic reticulum membrane. It catalyses the reaction 2 R'C(R)SH + O2 = R'C(R)S-S(R)CR' + H2O2. FAD-dependent sulfhydryl oxidase that catalyzes disulfide bond formation in the endoplasmic reticulum lumen in parallel to ERO1. The polypeptide is FAD-linked sulfhydryl oxidase ERV2 (ERV2) (Saccharomyces cerevisiae (strain ATCC 204508 / S288c) (Baker's yeast)).